The following is a 230-amino-acid chain: Flagellar L-ring protein (230 aa).

The first 22 residues, Met-1–Gly-22, serve as a signal peptide directing secretion. Cys-23 is lipidated: N-palmitoyl cysteine. The S-diacylglycerol cysteine moiety is linked to residue Cys-23.

The protein belongs to the FlgH family. As to quaternary structure, the basal body constitutes a major portion of the flagellar organelle and consists of four rings (L,P,S, and M) mounted on a central rod.

It localises to the cell outer membrane. It is found in the bacterial flagellum basal body. Assembles around the rod to form the L-ring and probably protects the motor/basal body from shearing forces during rotation. The chain is Flagellar L-ring protein from Stenotrophomonas maltophilia (strain K279a).